The following is a 455-amino-acid chain: Ribulose bisphosphate carboxylase large chain (455 aa).

Lys-5 carries the post-translational modification N6,N6,N6-trimethyllysine. Residues Asn-114 and Thr-164 each contribute to the substrate site. The active-site Proton acceptor is Lys-166. Lys-168 is a substrate binding site. Mg(2+) is bound by residues Lys-192, Asp-194, and Glu-195. An N6-carboxylysine modification is found at Lys-192. The active-site Proton acceptor is the His-285. Positions 286, 318, and 370 each coordinate substrate.

The protein belongs to the RuBisCO large chain family. Type I subfamily. Heterohexadecamer of 8 large chains and 8 small chains; disulfide-linked. The disulfide link is formed within the large subunit homodimers. Mg(2+) serves as cofactor. The disulfide bond which can form in the large chain dimeric partners within the hexadecamer appears to be associated with oxidative stress and protein turnover.

The protein resides in the plastid. It is found in the chloroplast. It carries out the reaction 2 (2R)-3-phosphoglycerate + 2 H(+) = D-ribulose 1,5-bisphosphate + CO2 + H2O. The catalysed reaction is D-ribulose 1,5-bisphosphate + O2 = 2-phosphoglycolate + (2R)-3-phosphoglycerate + 2 H(+). In terms of biological role, ruBisCO catalyzes two reactions: the carboxylation of D-ribulose 1,5-bisphosphate, the primary event in carbon dioxide fixation, as well as the oxidative fragmentation of the pentose substrate in the photorespiration process. Both reactions occur simultaneously and in competition at the same active site. This chain is Ribulose bisphosphate carboxylase large chain, found in Erythrina crista-galli (Cockspur coral tree).